A 722-amino-acid chain; its full sequence is Metal transporter cnnm-5 (722 aa).

Residues 1–17 (MSLFLFAIFQLALGSPG) form the signal peptide. Residues 18–139 (APNGPNVPLQ…AAAAKYMGDE (122 aa)) lie on the Extracellular side of the membrane. N-linked (GlcNAc...) asparagine glycans are attached at residues asparagine 102 and asparagine 114. The region spanning 132–318 (AAKYMGDEIV…AQNEREKTIL (187 aa)) is the CNNM transmembrane domain. Residues 140 to 160 (IVFCFFCILMSAYASGMTLGY) form a helical membrane-spanning segment. Over 161–196 (MKFSMIDLNTMLKIAEGDAAKKRVRRIMHFRRRSTQ) the chain is Cytoplasmic. Residues 197–217 (LVVTFSLFSSVFTVLFTTTCE) form a helical membrane-spanning segment. Residues 218–227 (KMLHGVSNED) are Extracellular-facing. A helical transmembrane segment spans residues 228 to 248 (VLKMAVPALICLIFAEMIPQA). Over 249 to 257 (VCNSKFGFN) the chain is Cytoplasmic. Residues 258–278 (LAASLWFVTVIIFFVTLPIAY) traverse the membrane as a helical segment. Residues 279-722 (PASLVLGRFL…ETTPFMEKQE (444 aa)) lie on the Extracellular side of the membrane. N-linked (GlcNAc...) asparagine glycosylation is found at asparagine 320, asparagine 349, and asparagine 371. 2 CBS domains span residues 333-396 (MVPI…LIDE) and 413-473 (TVKF…KIDE). Residues 584 to 607 (SQRSSSTVNSQQHRQQTTDNSRST) form a disordered region. A glycan (N-linked (GlcNAc...) asparagine) is linked at asparagine 639. The disordered stretch occupies residues 686–722 (LNSRASTSTSTTPACRTPLSVDARSQDETTPFMEKQE). A compositionally biased stretch (low complexity) spans 688–703 (SRASTSTSTTPACRTP).

It belongs to the ACDP family.

It localises to the cell membrane. Functionally, probable metal transporter. Probably acts redundantly with the other metal transport proteins cnnm-1, cnnm-2, cnnm-3 and cnnm-4 to regulate Mg(2+) homeostasis. This Caenorhabditis elegans protein is Metal transporter cnnm-5.